The sequence spans 83 residues: Mu-theraphotoxin-Hhn2e (83 aa).

An N-terminal signal peptide occupies residues 1–21 (MKASMFLALAGLVLLFVVGYA). Positions 22 to 48 (SESEEKEFPRELLSKIFAVDDFKGEER) are excised as a propeptide. 3 cysteine pairs are disulfide-bonded: Cys-50–Cys-65, Cys-57–Cys-70, and Cys-64–Cys-77. Leu-81 carries the leucine amide modification.

It belongs to the neurotoxin 10 (Hwtx-1) family. 15 (Hntx-3) subfamily. In terms of assembly, monomer. As to expression, expressed by the venom gland.

Its subcellular location is the secreted. Functionally, lethal neurotoxin. Selectively blocks tetrodotoxin-sensitive voltage-gated sodium channels (Nav). Does not affect tetrodotoxin-resistant voltage-gated sodium channels or calcium channels. The sequence is that of Mu-theraphotoxin-Hhn2e from Cyriopagopus hainanus (Chinese bird spider).